The sequence spans 322 residues: Beta-ketoacyl-[acyl-carrier-protein] synthase III (322 aa).

Active-site residues include cysteine 112 and histidine 249. Positions 250–254 are ACP-binding; the sequence is QANQR. Residue asparagine 279 is part of the active site.

This sequence belongs to the thiolase-like superfamily. FabH family. Homodimer.

It localises to the cytoplasm. The enzyme catalyses malonyl-[ACP] + acetyl-CoA + H(+) = 3-oxobutanoyl-[ACP] + CO2 + CoA. The protein operates within lipid metabolism; fatty acid biosynthesis. Catalyzes the condensation reaction of fatty acid synthesis by the addition to an acyl acceptor of two carbons from malonyl-ACP. Catalyzes the first condensation reaction which initiates fatty acid synthesis and may therefore play a role in governing the total rate of fatty acid production. Possesses both acetoacetyl-ACP synthase and acetyl transacylase activities. Its substrate specificity determines the biosynthesis of branched-chain and/or straight-chain of fatty acids. The sequence is that of Beta-ketoacyl-[acyl-carrier-protein] synthase III from Caulobacter vibrioides (strain ATCC 19089 / CIP 103742 / CB 15) (Caulobacter crescentus).